The primary structure comprises 456 residues: Bifunctional protein GlmU (456 aa).

The tract at residues 1 to 228 is pyrophosphorylase; sequence MPQNTLNIVI…SHLAAGVNNK (228 aa). UDP-N-acetyl-alpha-D-glucosamine-binding positions include 11–14, K25, Q75, 80–81, 102–104, G138, E153, N168, and N226; these read LAAG, GT, and YGD. D104 contacts Mg(2+). N226 is a binding site for Mg(2+). Residues 229–249 are linker; it reads LQLTELERIFQTEQAQELLKA. Residues 250–456 are N-acetyltransferase; it reads GVTLRDPARF…GWVRPEKDKQ (207 aa). UDP-N-acetyl-alpha-D-glucosamine is bound by residues R332 and K350. Residue H362 is the Proton acceptor of the active site. Residues Y365 and N376 each coordinate UDP-N-acetyl-alpha-D-glucosamine. Acetyl-CoA is bound by residues A379, 385-386, S404, A422, and R439; that span reads NY.

It in the N-terminal section; belongs to the N-acetylglucosamine-1-phosphate uridyltransferase family. In the C-terminal section; belongs to the transferase hexapeptide repeat family. Homotrimer. Requires Mg(2+) as cofactor.

It is found in the cytoplasm. It carries out the reaction alpha-D-glucosamine 1-phosphate + acetyl-CoA = N-acetyl-alpha-D-glucosamine 1-phosphate + CoA + H(+). The enzyme catalyses N-acetyl-alpha-D-glucosamine 1-phosphate + UTP + H(+) = UDP-N-acetyl-alpha-D-glucosamine + diphosphate. Its pathway is nucleotide-sugar biosynthesis; UDP-N-acetyl-alpha-D-glucosamine biosynthesis; N-acetyl-alpha-D-glucosamine 1-phosphate from alpha-D-glucosamine 6-phosphate (route II): step 2/2. It participates in nucleotide-sugar biosynthesis; UDP-N-acetyl-alpha-D-glucosamine biosynthesis; UDP-N-acetyl-alpha-D-glucosamine from N-acetyl-alpha-D-glucosamine 1-phosphate: step 1/1. It functions in the pathway bacterial outer membrane biogenesis; LPS lipid A biosynthesis. Catalyzes the last two sequential reactions in the de novo biosynthetic pathway for UDP-N-acetylglucosamine (UDP-GlcNAc). The C-terminal domain catalyzes the transfer of acetyl group from acetyl coenzyme A to glucosamine-1-phosphate (GlcN-1-P) to produce N-acetylglucosamine-1-phosphate (GlcNAc-1-P), which is converted into UDP-GlcNAc by the transfer of uridine 5-monophosphate (from uridine 5-triphosphate), a reaction catalyzed by the N-terminal domain. In Neisseria meningitidis serogroup B (strain ATCC BAA-335 / MC58), this protein is Bifunctional protein GlmU.